We begin with the raw amino-acid sequence, 98 residues long: Large ribosomal subunit protein eL21 (98 aa).

Residues 1 to 24 (MVKKAHSFRRKTRGKLSKHPRRRG) show a composition bias toward basic residues. Residues 1–27 (MVKKAHSFRRKTRGKLSKHPRRRGLPP) are disordered.

The protein belongs to the eukaryotic ribosomal protein eL21 family. Part of the 50S ribosomal subunit.

This Thermococcus kodakarensis (strain ATCC BAA-918 / JCM 12380 / KOD1) (Pyrococcus kodakaraensis (strain KOD1)) protein is Large ribosomal subunit protein eL21.